Reading from the N-terminus, the 718-residue chain is Ophiobolin F synthase oblA (718 aa).

The segment at 1–320 (MACKYSTLID…RYNGPTKFNE (320 aa)) is (7Z)-ophiobola-7,19-dien-3-ol synthase. Mg(2+) is bound by residues Asp93 and Asp97. Residue Asp93 coordinates substrate. The DDXXD 1 signature appears at 93-97 (DDVID). Substrate contacts are provided by residues 180–183 (RALD), Asn224, 228–232 (SFEKE), and 311–312 (RY). An NSE/DTE motif is present at residues 224 to 232 (NDLFSFEKE). The interval 321-718 (LQLLRSEHGL…LRVMLELLKV (398 aa)) is geranylfarnesyl diphosphate synthase. Positions 346–391 (LVEGDCHESKPNELKRKRNGVSVDDEMRTNGTNGAKKPAHVSQPST) are disordered. The segment covering 349–359 (GDCHESKPNEL) has biased composition (basic and acidic residues). The isopentenyl diphosphate site is built by Lys429, Arg432, and His461. Asp468 and Asp472 together coordinate Mg(2+). The DDXXD 2 motif lies at 468-472 (DDLED). Arg477 lines the dimethylallyl diphosphate pocket. Arg478 is a binding site for isopentenyl diphosphate. Dimethylallyl diphosphate-binding residues include Lys555, Thr556, Gln594, Asn601, Lys611, and Lys621.

It in the N-terminal section; belongs to the terpene synthase family. In the C-terminal section; belongs to the FPP/GGPP synthase family. Mg(2+) serves as cofactor.

The enzyme catalyses isopentenyl diphosphate + (2E,6E)-farnesyl diphosphate = (2E,6E,10E)-geranylgeranyl diphosphate + diphosphate. The catalysed reaction is isopentenyl diphosphate + (2E,6E,10E)-geranylgeranyl diphosphate = (2E,6E,10E,14E)-geranylfarnesyl diphosphate + diphosphate. It catalyses the reaction (2E,6E,10E,14E)-geranylfarnesyl diphosphate + H2O = ophiobolin F + diphosphate. It functions in the pathway secondary metabolite biosynthesis; terpenoid biosynthesis. In terms of biological role, bifunctional sesterterpene synthase; part of the gene cluster that mediates the biosynthesis of the sesterterpenes ophiobolins, fungal phytotoxins with potential anti-cancer activities. The first step of the pathway is performed by the sesterterpene synthase oblA that possesses both prenyl transferase and terpene cyclase activity, converting isopentenyl diphosphate and dimethylallyl diphosphate into geranylfarnesyl diphosphate (GFPP) and further converting GFPP into ophiobolin F, respectively. Other sesterterpenoids (C(25) terpenoids) are found as minor products of oblA. It is expected that ophiobolin F is then oxidized to ophiobolin A via ophiobolin C and ophiobolin B intermediates by the combined action of the cytochrome P450 monooxygenase oblB and the FAD-dependent oxidoreductase oblC. Although oblB catalyzes multistep oxygenations at C5 and C21/C7 in a relatively efficient manner, it is unable to convert ophiobolin F to ophiobolin C and produces instead several unexpected derivatives. The chain is Ophiobolin F synthase oblA from Aspergillus clavatus (strain ATCC 1007 / CBS 513.65 / DSM 816 / NCTC 3887 / NRRL 1 / QM 1276 / 107).